The following is a 443-amino-acid chain: Xaa-Pro dipeptidase (443 aa).

5 residues coordinate Mn(2+): D246, D257, H339, E384, and E423.

The protein belongs to the peptidase M24B family. Bacterial-type prolidase subfamily. Mn(2+) is required as a cofactor.

The enzyme catalyses Xaa-L-Pro dipeptide + H2O = an L-alpha-amino acid + L-proline. Functionally, splits dipeptides with a prolyl residue in the C-terminal position. This Cronobacter sakazakii (strain ATCC BAA-894) (Enterobacter sakazakii) protein is Xaa-Pro dipeptidase.